The chain runs to 149 residues: Calmodulin (149 aa).

EF-hand domains are found at residues 8–43 (QQIA…LGQN), 44–79 (PSES…KMKD), 81–116 (DSEA…IGEK), and 117–149 (LSDA…LAAK). Ca(2+) is bound by residues aspartate 21, aspartate 23, aspartate 25, lysine 27, glutamate 32, aspartate 57, asparagine 59, aspartate 61, serine 63, glutamate 68, aspartate 94, asparagine 96, aspartate 98, lysine 100, glutamate 105, aspartate 130, asparagine 132, aspartate 134, glutamate 136, and glutamate 141.

This sequence belongs to the calmodulin family.

Its function is as follows. Calmodulin mediates the control of a large number of enzymes, ion channels and other proteins by Ca(2+). Among the enzymes to be stimulated by the calmodulin-Ca(2+) complex are a number of protein kinases and phosphatases. This is Calmodulin (CMD1) from Candida albicans (Yeast).